The chain runs to 20 residues: T cell receptor alpha joining 42 (20 aa).

The tract at residues tyrosine 1–proline 20 is disordered.

In terms of assembly, alpha-beta TR is a heterodimer composed of an alpha and beta chain; disulfide-linked. The alpha-beta TR is associated with the transmembrane signaling CD3 coreceptor proteins to form the TR-CD3 (TcR or TCR). The assembly of alpha-beta TR heterodimers with CD3 occurs in the endoplasmic reticulum where a single alpha-beta TR heterodimer associates with one CD3D-CD3E heterodimer, one CD3G-CD3E heterodimer and one CD247 homodimer forming a stable octameric structure. CD3D-CD3E and CD3G-CD3E heterodimers preferentially associate with TR alpha and TR beta chains, respectively. The association of the CD247 homodimer is the last step of TcR assembly in the endoplasmic reticulum and is required for transport to the cell surface.

Its subcellular location is the cell membrane. J region of the variable domain of T cell receptor (TR) alpha chain that participates in the antigen recognition. Alpha-beta T cell receptors are antigen specific receptors which are essential to the immune response and are present on the cell surface of T lymphocytes. Recognize peptide-major histocompatibility (MH) (pMH) complexes that are displayed by antigen presenting cells (APC), a prerequisite for efficient T cell adaptive immunity against pathogens. Binding of alpha-beta TR to pMH complex initiates TR-CD3 clustering on the cell surface and intracellular activation of LCK that phosphorylates the ITAM motifs of CD3G, CD3D, CD3E and CD247 enabling the recruitment of ZAP70. In turn, ZAP70 phosphorylates LAT, which recruits numerous signaling molecules to form the LAT signalosome. The LAT signalosome propagates signal branching to three major signaling pathways, the calcium, the mitogen-activated protein kinase (MAPK) kinase and the nuclear factor NF-kappa-B (NF-kB) pathways, leading to the mobilization of transcription factors that are critical for gene expression and essential for T cell growth and differentiation. The T cell repertoire is generated in the thymus, by V-(D)-J rearrangement. This repertoire is then shaped by intrathymic selection events to generate a peripheral T cell pool of self-MH restricted, non-autoaggressive T cells. Post-thymic interaction of alpha-beta TR with the pMH complexes shapes TR structural and functional avidity. The chain is T cell receptor alpha joining 42 from Homo sapiens (Human).